We begin with the raw amino-acid sequence, 379 residues long: Alcohol dehydrogenase 1 (379 aa).

The Zn(2+) site is built by C47, T49, H69, C99, C102, C105, C113, and C177. 2 residues coordinate an alcohol: T49 and H69. Residue T49 coordinates NAD(+). NAD(+) is bound by residues 202–207 (GLGAVG), D226, R231, T272, V295, 295–297 (VGV), F322, and R372.

This sequence belongs to the zinc-containing alcohol dehydrogenase family. Homodimer. The cofactor is Zn(2+).

It is found in the cytoplasm. The enzyme catalyses a primary alcohol + NAD(+) = an aldehyde + NADH + H(+). It carries out the reaction a secondary alcohol + NAD(+) = a ketone + NADH + H(+). The protein is Alcohol dehydrogenase 1 (ADH1) of Zea mays (Maize).